The primary structure comprises 704 residues: Penicillin-binding protein H (704 aa).

A helical transmembrane segment spans residues 23-43; sequence FFLAVFVLFTALIFKLGVVQI. The tract at residues 197 to 223 is disordered; that stretch reads MNPNKSNSNGKNGALLDEKKNSSQRPK. A compositionally biased stretch (low complexity) spans 200–209; the sequence is NKSNSNGKNG. The span at 212 to 223 shows a compositional bias: basic and acidic residues; that stretch reads LDEKKNSSQRPK. Catalysis depends on serine 415, which acts as the Acyl-ester intermediate.

Belongs to the transpeptidase family.

It localises to the cell membrane. The enzyme catalyses Preferential cleavage: (Ac)2-L-Lys-D-Ala-|-D-Ala. Also transpeptidation of peptidyl-alanyl moieties that are N-acyl substituents of D-alanine.. It participates in cell wall biogenesis; peptidoglycan biosynthesis. In terms of biological role, involved in the polymerization of peptidoglycan. Plays a redundant role with PBP-2A (pbpA) in determining the rod shape of the cell during vegetative growth and spore outgrowth. The polypeptide is Penicillin-binding protein H (Bacillus subtilis (strain 168)).